A 394-amino-acid chain; its full sequence is MLPAMKTVEAEEEYAEDCPELVPIETKHQEKEENLDFIIKIPVTIVTGYLGAGKTTLLNYILTEQHNRKIAVILNEFGEGSAVEKSLAVSQGGELYEEWLELRNGCLCCSVKDNGLKAIENLMQKKGKFDYILLETTGLADPGAVASMFWVDAELGSDIYLDGIITVVDSKYGLKHLTEEKPDGLVNEATRQVALADMILINKTDLVSEEELNKLRTTIRSINGLGKVLETQRSRTHLSNILDLHAYDTLSGISLQKKLQHVSTAPHLDQSIVTVTFDVPGSAEEESLNVFIQNLLWEKNVKNKDGRCMEVIRLKGLVSIKDKPQQMIVQGIHELYELEESRVNWKDDAERACQLVFIGKNLDKDILQQLFITAVAETKEQTTAPGQDGACPPH.

Positions 16-23 (EDCPELVP) match the psi-PxLVp motif motif. Position 48 to 55 (48 to 55 (GYLGAGKT)) interacts with GTP. Zn(2+) contacts are provided by Cys106, Cys108, and Cys109. The CXCC motif motif lies at 106-109 (CLCC). Residues 109–113 (CSVKD) and 202–205 (NKTD) each bind GTP. Residues 272-375 (IVTVTFDVPG…ILQQLFITAV (104 aa)) form the CobW C-terminal domain.

The protein belongs to the SIMIBI class G3E GTPase family. ZNG1 subfamily.

It localises to the nucleus. It catalyses the reaction GTP + H2O = GDP + phosphate + H(+). Functionally, zinc chaperone that directly transfers zinc cofactor to target metalloproteins, thereby activating them. Catalyzes zinc insertion into the active site of methionine aminopeptidase METAP1, which function to cleave the initiator methionine from polypeptides during or after protein translation. Mechanistically, the N-terminal psi-PxLVp motif binds to the C6H2-type zinc finger of inactive form of METAP1. After formation of the docked complex, zinc is transferred from the CXCC motif in the GTPase domain of ZNG1 to the zinc binding site in the peptidase domain of METAP1 in a process requiring GTP hydrolysis. GTP/GDP exchange is required for release of active METAP1. The polypeptide is Zinc-regulated GTPase metalloprotein activator 1 (Zng1) (Rattus norvegicus (Rat)).